Consider the following 337-residue polypeptide: tRNA N6-adenosine threonylcarbamoyltransferase (337 aa).

Residues His-111 and His-115 each coordinate Fe cation. Residues 134 to 138 (LVSGG), Asp-167, Gly-180, and Asn-272 each bind substrate. Position 300 (Asp-300) interacts with Fe cation.

Belongs to the KAE1 / TsaD family. Fe(2+) serves as cofactor.

The protein localises to the cytoplasm. The catalysed reaction is L-threonylcarbamoyladenylate + adenosine(37) in tRNA = N(6)-L-threonylcarbamoyladenosine(37) in tRNA + AMP + H(+). Required for the formation of a threonylcarbamoyl group on adenosine at position 37 (t(6)A37) in tRNAs that read codons beginning with adenine. Is involved in the transfer of the threonylcarbamoyl moiety of threonylcarbamoyl-AMP (TC-AMP) to the N6 group of A37, together with TsaE and TsaB. TsaD likely plays a direct catalytic role in this reaction. The protein is tRNA N6-adenosine threonylcarbamoyltransferase of Aeromonas hydrophila subsp. hydrophila (strain ATCC 7966 / DSM 30187 / BCRC 13018 / CCUG 14551 / JCM 1027 / KCTC 2358 / NCIMB 9240 / NCTC 8049).